Consider the following 299-residue polypeptide: Deoxyribonuclease-1-like 2 (299 aa).

An N-terminal signal peptide occupies residues 1-20 (MGGPRALLAALWALEAAGTA). Active-site residues include Glu-99 and His-170. The cysteines at positions 209 and 245 are disulfide-linked.

Belongs to the DNase I family. Mg(2+) is required as a cofactor. Requires Ca(2+) as cofactor. Preferentially expressed in the skin and up-regulated during keratinocytes differentiation. Highly abundant (at protein level) in the stratum granulosum.

Its subcellular location is the cytoplasm. The protein resides in the secreted. Divalent cation-dependent acid DNA endonuclease involved in the breakdown of the nucleus during corneocyte formation of epidermal keratinocytes. May play an immune role by eliminating harmful DNA released into the extracellular environment by damaged epidermal cells. In Homo sapiens (Human), this protein is Deoxyribonuclease-1-like 2 (DNASE1L2).